Reading from the N-terminus, the 138-residue chain is Methane monooxygenase regulatory protein B (138 aa).

The protein belongs to the TmoD/XamoD family. The soluble methane monooxygenase (sMMO) consists of four components A/MMOH (composed of alpha/MmoX, beta/MmoY and gamma/MmoZ), B/MMOB (MmoB), C/MMOR (MmoC) and D/MMOD (MmoD).

The B protein acts as a regulator of electron flow through the soluble mmo complex, switching the enzyme from an oxidase to a hydroxylase in the presence of the substrate. This is Methane monooxygenase regulatory protein B (mmoB) from Methylosinus trichosporium.